The chain runs to 362 residues: Peptide chain release factor 1 (362 aa).

Q237 carries the post-translational modification N5-methylglutamine.

This sequence belongs to the prokaryotic/mitochondrial release factor family. Methylated by PrmC. Methylation increases the termination efficiency of RF1.

Its subcellular location is the cytoplasm. Functionally, peptide chain release factor 1 directs the termination of translation in response to the peptide chain termination codons UAG and UAA. This Legionella pneumophila (strain Corby) protein is Peptide chain release factor 1.